Here is a 128-residue protein sequence, read N- to C-terminus: Large ribosomal subunit protein bL20c (128 aa).

It belongs to the bacterial ribosomal protein bL20 family.

The protein localises to the plastid. Its subcellular location is the chloroplast. Binds directly to 23S ribosomal RNA and is necessary for the in vitro assembly process of the 50S ribosomal subunit. It is not involved in the protein synthesizing functions of that subunit. This is Large ribosomal subunit protein bL20c from Gossypium barbadense (Sea Island cotton).